A 415-amino-acid chain; its full sequence is Casein kinase I isoform delta (415 aa).

The 269-residue stretch at 9–277 folds into the Protein kinase domain; sequence YRLGRKIGSG…YLRQLFRNLF (269 aa). Residues 15–23 and lysine 38 each bind ATP; that span reads IGSGSFGDI. The Proton acceptor role is filled by aspartate 128. The interval 278 to 364 is centrosomal localization signal (CLS); the sequence is HRQGFSYDYV…TSPRPVSGME (87 aa). The segment covering 301-315 has biased composition (basic and acidic residues); that stretch reads ADDAERERRDREERL. The segment at 301 to 415 is disordered; sequence ADDAERERRD…SSGLQSVVHR (115 aa). Residues 317–342 are autoinhibitory; sequence HSRNPATRGLPSTASGRLRGTQEVAP. Phosphoserine is present on residues serine 328 and serine 331. A compositionally biased stretch (polar residues) spans 347–358; sequence TPTSHTANTSPR. Phosphoserine is present on serine 370. Arginine 375 carries the omega-N-methylarginine modification. Over residues 380–400 the composition is skewed to polar residues; that stretch reads NISSSDLTGRQDTSRMSTSQI. 5 positions are modified to phosphoserine: serine 382, serine 383, serine 384, serine 407, and serine 411.

Belongs to the protein kinase superfamily. CK1 Ser/Thr protein kinase family. Casein kinase I subfamily. Monomer. Component of the circadian core oscillator, which includes the CRY proteins, CLOCK, or NPAS2, ARTNL/BMAL1 or ARTNL2/BMAL2, CSNK1D and/or CSNK1E, TIMELESS and the PER proteins. Interacts with DNMT1 and MAP1A. Interacts directly with PER1 and PER2 which may lead to their degradation. Interacts with MAPT/TAU, SNAPIN, DBNDD2, AIB1/NCOA3 and ESR1. Interacts with AKAP9/AKAP450; this interaction promotes centrosomal subcellular location. Binds to tubulins in mitotic cells upon DNA damage. Interacts with GJA1. Interacts with DDX3X; this interaction enhances CSNK1D kinase activity in vitro, but it is unclear whether this interaction is physiologically relevant. Interacts with FAM83A, FAM83B, FAM83E and FAM83H (via DUF1669). Post-translationally, autophosphorylated on serine and threonine residues; this autophosphorylation represses activity. Reactivated by phosphatase-mediated dephosphorylation. May be dephosphorylated by PP1.

Its subcellular location is the cytoplasm. It is found in the nucleus. The protein resides in the cytoskeleton. The protein localises to the microtubule organizing center. It localises to the centrosome. Its subcellular location is the perinuclear region. It is found in the cell membrane. The protein resides in the spindle. The protein localises to the golgi apparatus. The catalysed reaction is L-seryl-[protein] + ATP = O-phospho-L-seryl-[protein] + ADP + H(+). It catalyses the reaction L-threonyl-[protein] + ATP = O-phospho-L-threonyl-[protein] + ADP + H(+). It carries out the reaction L-seryl-[tau protein] + ATP = O-phospho-L-seryl-[tau protein] + ADP + H(+). The enzyme catalyses L-threonyl-[tau protein] + ATP = O-phospho-L-threonyl-[tau protein] + ADP + H(+). Exhibits substrate-dependent heparin activation. Drug-mediated inhibition leads to a delay of the oscillations with the magnitude of this effect dependent upon the timing of drug administration. Inhibited by phosphorylation. Functionally, essential serine/threonine-protein kinase that regulates diverse cellular growth and survival processes including Wnt signaling, DNA repair and circadian rhythms. It can phosphorylate a large number of proteins. Casein kinases are operationally defined by their preferential utilization of acidic proteins such as caseins as substrates. Phosphorylates connexin-43/GJA1, MAP1A, SNAPIN, MAPT/TAU, TOP2A, DCK, HIF1A, EIF6, p53/TP53, DVL2, DVL3, ESR1, AIB1/NCOA3, DNMT1, PKD2, YAP1, PER1 and PER2. Central component of the circadian clock. In balance with PP1, determines the circadian period length through the regulation of the speed and rhythmicity of PER1 and PER2 phosphorylation. Controls PER1 and PER2 nuclear transport and degradation. YAP1 phosphorylation promotes its SCF(beta-TRCP) E3 ubiquitin ligase-mediated ubiquitination and subsequent degradation. DNMT1 phosphorylation reduces its DNA-binding activity. Phosphorylation of ESR1 and AIB1/NCOA3 stimulates their activity and coactivation. Phosphorylation of DVL2 and DVL3 regulates WNT3A signaling pathway that controls neurite outgrowth. Phosphorylates NEDD9/HEF1. EIF6 phosphorylation promotes its nuclear export. Triggers down-regulation of dopamine receptors in the forebrain. Activates DCK in vitro by phosphorylation. TOP2A phosphorylation favors DNA cleavable complex formation. May regulate the formation of the mitotic spindle apparatus in extravillous trophoblast. Modulates connexin-43/GJA1 gap junction assembly by phosphorylation. Probably involved in lymphocyte physiology. Regulates fast synaptic transmission mediated by glutamate. This Pongo abelii (Sumatran orangutan) protein is Casein kinase I isoform delta (CSNK1D).